The sequence spans 124 residues: Large ribosomal subunit protein bL12 (124 aa).

The protein belongs to the bacterial ribosomal protein bL12 family. Homodimer. Part of the ribosomal stalk of the 50S ribosomal subunit. Forms a multimeric L10(L12)X complex, where L10 forms an elongated spine to which 2 to 4 L12 dimers bind in a sequential fashion. Binds GTP-bound translation factors.

In terms of biological role, forms part of the ribosomal stalk which helps the ribosome interact with GTP-bound translation factors. Is thus essential for accurate translation. The protein is Large ribosomal subunit protein bL12 of Bacteroides fragilis (strain ATCC 25285 / DSM 2151 / CCUG 4856 / JCM 11019 / LMG 10263 / NCTC 9343 / Onslow / VPI 2553 / EN-2).